The following is a 286-amino-acid chain: Beta-lactamase Ohio-1 (286 aa).

Positions 1–21 (MRYFRLCIISLLATLPLRVHA) are cleaved as a signal peptide. The Acyl-ester intermediate role is filled by S66. An intrachain disulfide couples C73 to C119. The active-site Proton acceptor is E164. 230–232 (KTG) serves as a coordination point for substrate.

Belongs to the class-A beta-lactamase family.

It catalyses the reaction a beta-lactam + H2O = a substituted beta-amino acid. This is Beta-lactamase Ohio-1 from Enterobacter cloacae.